The following is a 272-amino-acid chain: Putative phosphoenolpyruvate synthase regulatory protein (272 aa).

152 to 159 is a binding site for ADP; it reads GVSRSGKT.

The protein belongs to the pyruvate, phosphate/water dikinase regulatory protein family. PSRP subfamily.

The enzyme catalyses [pyruvate, water dikinase] + ADP = [pyruvate, water dikinase]-phosphate + AMP + H(+). It carries out the reaction [pyruvate, water dikinase]-phosphate + phosphate + H(+) = [pyruvate, water dikinase] + diphosphate. Functionally, bifunctional serine/threonine kinase and phosphorylase involved in the regulation of the phosphoenolpyruvate synthase (PEPS) by catalyzing its phosphorylation/dephosphorylation. The polypeptide is Putative phosphoenolpyruvate synthase regulatory protein (Methylibium petroleiphilum (strain ATCC BAA-1232 / LMG 22953 / PM1)).